Here is a 249-residue protein sequence, read N- to C-terminus: 2,3,4,5-tetrahydropyridine-2,6-dicarboxylate N-acetyltransferase (249 aa).

The protein belongs to the transferase hexapeptide repeat family. DapH subfamily.

The catalysed reaction is (S)-2,3,4,5-tetrahydrodipicolinate + acetyl-CoA + H2O = L-2-acetamido-6-oxoheptanedioate + CoA. The protein operates within amino-acid biosynthesis; L-lysine biosynthesis via DAP pathway; LL-2,6-diaminopimelate from (S)-tetrahydrodipicolinate (acetylase route): step 1/3. Functionally, catalyzes the transfer of an acetyl group from acetyl-CoA to tetrahydrodipicolinate. This is 2,3,4,5-tetrahydropyridine-2,6-dicarboxylate N-acetyltransferase from Fervidobacterium nodosum (strain ATCC 35602 / DSM 5306 / Rt17-B1).